Here is a 529-residue protein sequence, read N- to C-terminus: Peptide chain release factor 3 (529 aa).

The 270-residue stretch at 11–280 (SKRRTFAIIS…GLTEWAPAPK (270 aa)) folds into the tr-type G domain. GTP-binding positions include 20 to 27 (SHPDAGKT), 88 to 92 (DTPGH), and 142 to 145 (NKLD).

The protein belongs to the TRAFAC class translation factor GTPase superfamily. Classic translation factor GTPase family. PrfC subfamily.

It is found in the cytoplasm. Its function is as follows. Increases the formation of ribosomal termination complexes and stimulates activities of RF-1 and RF-2. It binds guanine nucleotides and has strong preference for UGA stop codons. It may interact directly with the ribosome. The stimulation of RF-1 and RF-2 is significantly reduced by GTP and GDP, but not by GMP. The protein is Peptide chain release factor 3 of Vibrio campbellii (strain ATCC BAA-1116).